The primary structure comprises 416 residues: Nuclear hormone receptor family member nhr-67 (416 aa).

Positions 18-98 (DVDCRVCEDH…IGMNKDAVQH (81 aa)) form a DNA-binding region, nuclear receptor. NR C4-type zinc fingers lie at residues 21-41 (CRVCEDHSSGKHYSIFSCDGC) and 57-86 (CKNKGSPSEGQCKVDKTHRNQCRACRLRKC). Residues 331–398 (KTETEEGEDI…SSRPRHSIRS (68 aa)) are disordered. Acidic residues predominate over residues 335-346 (EEGEDIEEEDDA). Over residues 377–390 (SSTQPSSASSPSSS) the composition is skewed to low complexity.

Belongs to the nuclear hormone receptor family. As to expression, expressed in linker cell.

It is found in the nucleus. Orphan nuclear receptor that binds DNA containing an extended core motif half-site sequence 5'-AAGTCA-3'. In males, plays an essential role in the migration of the linker cell which guides gonad elongation during the L3 and L4 stages of larval development by negatively regulating the expression of netrin receptor unc-5 at the mid-L3 stage. Involved in the regulation of non-apoptotic cell death in the linker cell, acting upstream of or in parallel to transcription factor hsf-1. Represses hypoxia response genes, fmo-2 and acs-2, in both normoxic and hypoxic conditions, probably acting via repression of nuclear receptor nhr-49. The protein is Nuclear hormone receptor family member nhr-67 (nhr-67) of Caenorhabditis elegans.